The following is a 320-amino-acid chain: Olfactory receptor 52W1 (320 aa).

The Extracellular segment spans residues 1 to 30; the sequence is MAETLQLNSTFLHPNFFILTGFPGLGSAQT. Asn-8 is a glycosylation site (N-linked (GlcNAc...) asparagine). Residues 31–51 form a helical membrane-spanning segment; that stretch reads WLTLVFGPIYLLALLGNGALP. Topologically, residues 52–59 are cytoplasmic; it reads AVVWIDST. The helical transmembrane segment at 60–80 threads the bilayer; that stretch reads LHQPMFLLLAILAATDLGLAT. Over 81–104 the chain is Extracellular; that stretch reads SIAPGLLAVLWLGPRSVPYAVCLV. A helical transmembrane segment spans residues 105–125; it reads QMFFVHALTAMESGVLLAMAC. The Cytoplasmic portion of the chain corresponds to 126-144; sequence DRAAAIGRPLHYPVLVTKA. The helical transmembrane segment at 145–165 threads the bilayer; sequence CVGYAALALALKAVAIVVPFP. Topologically, residues 166–201 are extracellular; the sequence is LLVAKFEHFQAKTIGHTYCAHMAVVELVVGNTQATN. The chain crosses the membrane as a helical span at residues 202 to 222; it reads LYGLALSLAISGMDILGITGS. Residues 223–242 lie on the Cytoplasmic side of the membrane; that stretch reads YGLIAHAVLQLPTREAHAKA. A helical membrane pass occupies residues 243 to 263; that stretch reads FGTCSSHICVILAFYIPGLFS. Residues 264–279 lie on the Extracellular side of the membrane; sequence YLTHRFGHHTVPKPVH. A helical membrane pass occupies residues 280–300; sequence ILLSNIYLLLPPALNPLIYGA. The Cytoplasmic portion of the chain corresponds to 301–320; the sequence is RTKQIRDRLLETFTFRKSPL.

Belongs to the G-protein coupled receptor 1 family.

It localises to the cell membrane. In terms of biological role, odorant receptor. The protein is Olfactory receptor 52W1 (OR52W1) of Homo sapiens (Human).